The primary structure comprises 121 residues: uncharacterized protein (121 aa).

Disordered regions lie at residues 24–43 (SGRT…GRGG) and 100–121 (DHEN…TDQR).

This is an uncharacterized protein from Homo sapiens (Human).